We begin with the raw amino-acid sequence, 780 residues long: Replication origin-binding protein (780 aa).

The 157-residue stretch at Ser-39–Ala-195 folds into the Helicase ATP-binding domain. Position 52–59 (Ala-52–Thr-59) interacts with ATP.

Belongs to the herpesviridae OriBP family.

Probably involved in DNA replication. Binds the origin of replication (ori). This Homo sapiens (Human) protein is Replication origin-binding protein (U73).